Consider the following 297-residue polypeptide: Acetyl-coenzyme A carboxylase carboxyl transferase subunit beta (297 aa).

Positions 25-294 (LWVKCPETGQ…VPPKGRLPAP (270 aa)) constitute a CoA carboxyltransferase N-terminal domain.

This sequence belongs to the AccD/PCCB family. Acetyl-CoA carboxylase is a heterohexamer composed of biotin carboxyl carrier protein (AccB), biotin carboxylase (AccC) and two subunits each of ACCase subunit alpha (AccA) and ACCase subunit beta (AccD).

It is found in the cytoplasm. It carries out the reaction N(6)-carboxybiotinyl-L-lysyl-[protein] + acetyl-CoA = N(6)-biotinyl-L-lysyl-[protein] + malonyl-CoA. It participates in lipid metabolism; malonyl-CoA biosynthesis; malonyl-CoA from acetyl-CoA: step 1/1. In terms of biological role, component of the acetyl coenzyme A carboxylase (ACC) complex. Biotin carboxylase (BC) catalyzes the carboxylation of biotin on its carrier protein (BCCP) and then the CO(2) group is transferred by the transcarboxylase to acetyl-CoA to form malonyl-CoA. This chain is Acetyl-coenzyme A carboxylase carboxyl transferase subunit beta, found in Azorhizobium caulinodans (strain ATCC 43989 / DSM 5975 / JCM 20966 / LMG 6465 / NBRC 14845 / NCIMB 13405 / ORS 571).